A 194-amino-acid polypeptide reads, in one-letter code: MSISILKDKKLLIGICGSISSVGISSYLLYFKSFFKEIRVVMTKTAEDLIPAHTVSYFCDHVYSEHGENGKRHSHVEIGRWADIYCIIPATANILGQTANGVAMNLVATTVLAHPHNTIFFPNMNDLMWNKTVVSRNIEQLRKDGHIVIEPVEIMAFEIATGTRKPNRGLITPDKALLAIEKGFKERTKHPSLT.

His75 is a catalytic residue.

Belongs to the HFCD (homooligomeric flavin containing Cys decarboxylase) superfamily. In terms of assembly, homododecamer. It depends on FAD as a cofactor.

It functions in the pathway antibiotic biosynthesis; mersacidin biosynthesis. In terms of biological role, catalyzes the oxidative decarboxylation of the C-terminal cysteine residue of mersacidin to an aminoenethiol residue. This is Mersacidin decarboxylase (mrsD) from Bacillus sp. (strain HIL-Y85/54728).